The sequence spans 853 residues: Deubiquitinase otu (853 aa).

Positions 1–20 (MDMQVQRPITSGSRQAPDPY) are disordered. The 122-residue stretch at 29-150 (LYRKHTARDA…ENHFDSVYDV (122 aa)) folds into the OTU domain. The active site involves D37. Catalysis depends on S40, which acts as the Nucleophile. H143 is an active-site residue. In terms of domain architecture, Tudor spans 336–396 (NFKVGAKCKV…HPLPPDEYRP (61 aa)). Residues 396–853 (PWSLPFRYHR…AAVYAATRHH (458 aa)) are LC domain. Positions 460–470 (QDDEQRDHNDP) are enriched in basic and acidic residues. Disordered stretches follow at residues 460–531 (QDDE…YVPM), 681–704 (AVESTPPPSPEVANATEQSPLEKS), 732–794 (GPAA…AAQG), and 817–853 (NMDPSAQPQQQQPATLQPAPLSVQSQPAAVYAATRHH). Residues 499–517 (SRVQPQNSSSSQNQEVSGS) are compositionally biased toward low complexity. A compositionally biased stretch (polar residues) spans 747-758 (NGSQFSFYTTPS). Positions 769–778 (LLQPPPPPPI) are enriched in pro residues. Composition is skewed to low complexity over residues 783 to 794 (AGPPQLGGAAQG) and 820 to 838 (PSAQPQQQQPATLQPAPLS).

In terms of assembly, self aggregates, forming amyloid-like fibrillar helical structures; protein aggregation is mediated by the C-terminal LC domain, is enhanced by RNA binding and is essential for deubiquitinase activity. Interacts (via OTU domain) with bam (via C-terminus); the interaction enhances otu aggregation and deubiquitinase activity. Together with bam interacts with CycA/cyclin-A; the interaction stabilizes CycA by promoting its deubiquitination. Together with bam interacts with Traf6. Interacts with Hrb27C; the interaction is RNA-independent. Associates (via N-terminus) with mRNP complexes; the interaction is weak. As to expression, expressed at high levels in the ovary, at low levels in the brain and fat body, and at moderate levels in the gut.

Its subcellular location is the cytoplasm. It localises to the cell cortex. It is found in the perinuclear region. Its activity is regulated as follows. Activated by protein aggregation, which is mediated by the LC domain and enhanced by RNA binding. Catalytic component of a deubiquitinase complex consisting of bam and otu. The complex deubiquitinates K63-linked polyubiquitinated proteins; this antagonizes the ubiquitination activity of Traf6 and regulates the IMD immune signaling pathway. Otu-bam deubiquitinase activity is regulated by Traf6 dependent immune signaling regulation of bam expression levels; this forms a feedback loop that regulates the IMD immune signaling pathway and balances gut immune activity during aging. The complex deubiquitinates and stabilizes CycA/cyclin-A to regulate CycA-dependent differentiation. Involved in grk mRNA localization to the dorsal anterior region of the oocyte required for dorsal-ventral axis determination; may function as a ribonuclear protein complex together with sqd and Hrb27C. May regulate actin cytoskeleton organization in differentiating cystocytes during fusome maturation; required for efficient nurse cell cytoplasmic dumping during oogenesis. Essential for female fertility; involved in germ cell proliferation and germ cell differentiation. In terms of biological role, involved in the early stages of germ cell proliferation and differentiation during oogenesis. Required for polytene chromosome dispersal in nurse cells during oogenesis. Its function is as follows. Involved in the later stages of germ cell proliferation and differentiation during oogenesis. In Drosophila melanogaster (Fruit fly), this protein is Deubiquitinase otu.